We begin with the raw amino-acid sequence, 607 residues long: Vacuolar fusion protein MON1 homolog (607 aa).

Residues 1-14 are compositionally biased toward low complexity; it reads MATSDSRSSPSSSD. Disordered stretches follow at residues 1–173 and 463–486; these read MATS…DDAS and PIDRRRRSSTTNQEQDSPGPDISV. Over residues 21-55 the composition is skewed to polar residues; sequence NPSSDPETNSERVQSQLESMNLSQPSEVSDGSHTE.

This sequence belongs to the MON1/SAND family. In terms of assembly, interacts with CCZ1A, CCZ1B and RABF2B. As to expression, widely expressed at stable levels.

The protein localises to the endosome. The protein resides in the prevacuolar compartment. Its function is as follows. Plays an important role in membrane trafficking through the secretory apparatus. In complex with CCZ1, acts as a guanine exchange factor (GEF) for RABG3F of the Rab7 protein family. Promotes the exchange of GDP to GTP, converting RABG3F from an inactive GDP-bound form into an active GTP-bound form. The RABG3F active form is involved in protein trafficking from prevacuolar compartments (PVCs) to vacuoles. May serve as a linker between Rab5 and Rab7 protein families in PVCs and mediate PVC maturation. This chain is Vacuolar fusion protein MON1 homolog, found in Arabidopsis thaliana (Mouse-ear cress).